The following is a 1001-amino-acid chain: Phosphatidylinositol 4,5-bisphosphate 5-phosphatase A (1001 aa).

The span at 1 to 12 (MEGQSRSGSAKS) shows a compositional bias: polar residues. Disordered regions lie at residues 1–130 (MEGQ…VASV) and 144–412 (SASA…QPTC). The RSXSXX motif 1 motif lies at 6–11 (RSGSAK). A compositionally biased stretch (low complexity) spans 13 to 28 (GTRTGLGPLPGTHGAL). Residues 29 to 42 (QTGTPSKKVNSSFQ) are compositionally biased toward polar residues. Asymmetric dimethylarginine; alternate is present on R56. An Omega-N-methylarginine; alternate modification is found at R56. R65 carries the post-translational modification Omega-N-methylarginine. Residue R76 is modified to Asymmetric dimethylarginine. R83 carries the asymmetric dimethylarginine; alternate modification. R83 is subject to Omega-N-methylarginine; alternate. Residues 161–174 (SPTSRDQKQLSPTS) show a composition bias toward polar residues. Phosphoserine is present on S171. The span at 180 to 196 (ALATSGLSLALASQEQP) shows a compositional bias: low complexity. Residues 197–210 (PQSPSSPSPVPSPV) show a composition bias toward pro residues. Over residues 284 to 294 (ARPEAPRHSPE) the composition is skewed to basic and acidic residues. Phosphoserine is present on residues S292 and S325. The span at 338 to 348 (VPPPLPKPPRS) shows a compositional bias: pro residues. The SH3-binding signature appears at 346-351 (PRSPSR). 2 stretches are compositionally biased toward low complexity: residues 349-361 (PSRS…NRSP) and 394-411 (SPVA…AQPT). The RSXSXX motif 2 signature appears at 351 to 356 (RSPSRS). Residues 420-723 (ITVVTWNVGT…SDHKPVAARF (304 aa)) are catalytic. Residues 724–835 (LLQFAFRDDV…IGVTEPFQIS (112 aa)) are required for ruffle localization. Residues 837–1001 (PTSESASSST…LGLEDGGLGP (165 aa)) are disordered. The segment covering 838–853 (TSESASSSTDSSGTSS) has biased composition (low complexity). Short sequence motifs (RSXSXX motif) lie at residues 869–874 (RSPSPG) and 880–885 (RSRSPG). Phosphoserine is present on S898. Composition is skewed to low complexity over residues 905-917 (SRSP…QLPR) and 925-936 (SSGSRGSSEEGP). The RSXSXX motif 5 motif lies at 906 to 911 (RSPSPQ). The span at 937-949 (SGPPGPWAFPPAV) shows a compositional bias: pro residues. S985 bears the Phosphoserine mark.

This sequence belongs to the inositol 1,4,5-trisphosphate 5-phosphatase type II family. Post-translationally, phosphorylated on Ser/Thr residues. As to expression, expressed in heart, brain, kidney, stomach, small intestine and lung. Not expressed in spleen, thymus, skeletal muscle, testis and skin.

It is found in the cytoplasm. The catalysed reaction is 1D-myo-inositol 1,4,5-trisphosphate + H2O = 1D-myo-inositol 1,4-bisphosphate + phosphate. It carries out the reaction 1D-myo-inositol 1,3,4,5-tetrakisphosphate + H2O = 1D-myo-inositol 1,3,4-trisphosphate + phosphate. The enzyme catalyses a 1,2-diacyl-sn-glycero-3-phospho-(1D-myo-inositol-4,5-bisphosphate) + H2O = a 1,2-diacyl-sn-glycero-3-phospho-(1D-myo-inositol 4-phosphate) + phosphate. Inositol 5-phosphatase, which converts inositol 1,4,5-trisphosphate to inositol 1,4-bisphosphate. Also converts phosphatidylinositol 4,5-bisphosphate to phosphatidylinositol 4-phosphate and inositol 1,3,4,5-tetrakisphosphate to inositol 1,3,4-trisphosphate in vitro. May be involved in modulation of the function of inositol and phosphatidylinositol polyphosphate-binding proteins that are present at membranes ruffles. The protein is Phosphatidylinositol 4,5-bisphosphate 5-phosphatase A (Inpp5j) of Rattus norvegicus (Rat).